A 568-amino-acid polypeptide reads, in one-letter code: K(+) efflux antiporter 5 (568 aa).

The N-terminal stretch at 1–20 (MARFAVIGLTFLLLLGTSLS) is a signal peptide. The tract at residues 59–78 (EFSENDSPEGSDGASFNSSV) is disordered. 12 helical membrane passes run 154 to 174 (LISD…VFSC), 178 to 198 (PVIV…LKFI), 201 to 221 (MVQV…ALGL), 230 to 250 (VVGP…MFLC), 264 to 284 (GIFV…KFLV), 298 to 318 (IGIL…LPVL), 334 to 354 (LLLI…SFVP), 389 to 409 (LGLS…TTEF), 422 to 442 (NLFA…HFLW), 447 to 467 (ILLA…AVVV), 476 to 496 (ISFH…VLLS), and 510 to 530 (LLLL…FKLI).

This sequence belongs to the monovalent cation:proton antiporter 2 (CPA2) transporter (TC 2.A.37) family. KEA (TC 2.A.37.1) subfamily. In terms of tissue distribution, expressed in roots, stems, leaves, flowers and silique.

It localises to the golgi apparatus membrane. The protein localises to the golgi apparatus. It is found in the trans-Golgi network membrane. Its subcellular location is the prevacuolar compartment membrane. The protein resides in the endomembrane system. It catalyses the reaction K(+)(in) + H(+)(out) = K(+)(out) + H(+)(in). Its function is as follows. Electroneutral K(+)/H(+) efflux antiporter involved in K(+) homeostasis and osmotic adjustment. Together with KEA4 and KEA6, promotes growth and development, and facilitates endosomal pH and ions homeostasis, as well as salt tolerance (e.g. K(+), NaCl and LiCl), probably by supporting cell wall biosynthesis during rapid etiolated seedling growth. This chain is K(+) efflux antiporter 5, found in Arabidopsis thaliana (Mouse-ear cress).